Reading from the N-terminus, the 305-residue chain is Oxidoreductase swnR (305 aa).

The protein belongs to the NmrA-type oxidoreductase family. Isoflavone reductase subfamily.

It catalyses the reaction L-pipecolate + O2 = L-1-piperideine-6-carboxylate + H2O2 + H(+). Its pathway is mycotoxin biosynthesis. In terms of biological role, oxidoreductase; part of the gene cluster that mediates the biosynthesis of swainsonine (SW), a cytotoxic fungal alkaloid and a potential cancer therapy drug. Swainsonine production occurs via a multibranched pathway and is dispensable for fungal colonization of plants and infection of insect hosts. The first step of swainsonine biosynthesis is the production of the precursor pipecolic acid (PA) via conversion of L-lysine (Lys) to 1-piperideine-6-carboxylate (P6C) by the aminotransferase swnA, the latter being further reduced to PA by the reductase swnR. PA can be converted from lysine by both the SW biosynthetic cluster and the unclustered genes such as lysine cyclodeaminase. The PKS-NRPS hybrid synthetase swnK uptakes and condensates PA and malonyl-CoA with and without skipping of the ketoreductase (KR) domain in order to produce 3 intermediates, 1-oxoindolizidine, (1S)-1-hydroxyindolizin, and (1R)-1-hydroxyindolizine; with the transisomer (1S)-1-hydroxyindolizin being predominant. The terminal thioester reductase (TE) domain of swnK is involved in reduction of the thioester bond to release the intermediate aldehydes. The oxidoreductase swnN could contribute to the reduction of 1-oxoindolizidine to (1S)-1-hydroxyindolizin and (1R)-1-hydroxyindolizine, contributing to the major route of SW production. The dioxygenase swnH2 would be responsible for the oxidization of (1R)-1-hydroxyindolizine into (1R,2S)-1,2-dihydroxyindolizine and of (1S)-1-hydroxyindolizin to yield both (1R,2S)-1,2-dihydroxyindolizine and (1S,2S)-1,2-dihydroxyindolizine. The dioxygenase swnH1 then performs the conversion of the 1,2-dihydroxyindolizine epimers to SW. The polypeptide is Oxidoreductase swnR (Metarhizium robertsii (strain ARSEF 23 / ATCC MYA-3075) (Metarhizium anisopliae (strain ARSEF 23))).